A 301-amino-acid polypeptide reads, in one-letter code: Pyridoxal 5'-phosphate synthase subunit Pdx1 (301 aa).

Residue Asp26 coordinates D-ribose 5-phosphate. Lys83 serves as the catalytic Schiff-base intermediate with D-ribose 5-phosphate. Gly155 serves as a coordination point for D-ribose 5-phosphate. Residue Arg167 coordinates D-glyceraldehyde 3-phosphate. D-ribose 5-phosphate contacts are provided by residues Gly216 and 237-238 (GS).

Belongs to the PdxS/SNZ family. In terms of assembly, homohexamer and homododecamer. In the presence of Pdx2, forms a dodecamer of heterodimers.

The protein localises to the cytoplasm. It carries out the reaction aldehydo-D-ribose 5-phosphate + D-glyceraldehyde 3-phosphate + L-glutamine = pyridoxal 5'-phosphate + L-glutamate + phosphate + 3 H2O + H(+). It participates in cofactor biosynthesis; pyridoxal 5'-phosphate biosynthesis. Its function is as follows. Catalyzes the formation of pyridoxal 5'-phosphate from ribose 5-phosphate (RBP), glyceraldehyde 3-phosphate (G3P) and ammonia. The ammonia is provided by Pdx2. Can also use ribulose 5-phosphate and dihydroxyacetone phosphate as substrates, resulting from enzyme-catalyzed isomerization of RBP and G3P, respectively. This chain is Pyridoxal 5'-phosphate synthase subunit Pdx1 (pdx1), found in Plasmodium falciparum (isolate 3D7).